The chain runs to 492 residues: Adenosylhomocysteinase (492 aa).

Residues Thr68, Asp153, and Glu215 each contribute to the substrate site. 216–218 (TTT) is an NAD(+) binding site. Substrate is bound by residues Lys245 and Asp249. NAD(+)-binding positions include Asn250, 279 to 284 (GYGDVG), Glu302, Asn337, 358 to 360 (IGH), and Asn406.

It belongs to the adenosylhomocysteinase family. It depends on NAD(+) as a cofactor.

It is found in the cytoplasm. The catalysed reaction is S-adenosyl-L-homocysteine + H2O = L-homocysteine + adenosine. The protein operates within amino-acid biosynthesis; L-homocysteine biosynthesis; L-homocysteine from S-adenosyl-L-homocysteine: step 1/1. Functionally, may play a key role in the regulation of the intracellular concentration of adenosylhomocysteine. The protein is Adenosylhomocysteinase of Mycobacterium leprae (strain Br4923).